Here is a 989-residue protein sequence, read N- to C-terminus: Voltage-gated delayed rectifier potassium channel KCNH1 (989 aa).

Topologically, residues M1–W220 are cytoplasmic. In terms of domain architecture, PAS spans Q14–S94. A PAC domain is found at N93–C145. The segment at F151–R162 is required for phosphatidylinositol bisphosphate binding. Residues D221 to F241 form a helical membrane-spanning segment. Topologically, residues K242 to V248 are extracellular. Residues A249–F269 form a helical membrane-spanning segment. Residues H270–N290 lie on the Cytoplasmic side of the membrane. Residues Y291 to I309 form a helical membrane-spanning segment. Residues N310–G345 lie on the Extracellular side of the membrane. A helical; Voltage-sensor membrane pass occupies residues I346–L368. Residues D369–A377 are Cytoplasmic-facing. Residues V378–S399 form a helical membrane-spanning segment. At I400 to S448 the chain is on the extracellular side. N-linked (GlcNAc...) asparagine glycosylation is found at N415 and N433. Residues V449–A470 constitute an intramembrane region (pore-forming). The short motif at S463–N468 is the Selectivity filter element. The Extracellular segment spans residues P471 to K477. Residues I478 to V498 form a helical membrane-spanning segment. At T499–S989 the chain is on the cytoplasmic side. Residues K673–N770 form a calmodulin-binding region. The tract at residues Y699 to L701 is interaction with cyclic nucleotide-binding pocket. 2 stretches are compositionally biased toward basic and acidic residues: residues E857–S879 and S887–Q901. 2 disordered regions span residues E857 to P905 and R961 to S989. The interval A924–A964 is CAD (involved in subunit assembly). Residues G962–P979 show a composition bias toward polar residues. S974, S978, and S981 each carry phosphoserine. The span at E980–S989 shows a compositional bias: basic and acidic residues.

Belongs to the potassium channel family. H (Eag) (TC 1.A.1.20) subfamily. Kv10.1/KCNH1 sub-subfamily. As to quaternary structure, homomultimer. The potassium channel is composed of a homo- or heterotetrameric complex of pore-forming alpha subunits that can associate with modulating beta subunits. Heteromultimer with KCNH5/EAG2. Interacts with ALG10B. Interacts with RABEP1. Interacts (via C-terminus) with CTTN. Interacts (via C-terminal cytoplasmic region) with Ca(2+)-bound calmodulin. Post-translationally, channel activity is regulated via tyrosine phosphorylation/dephosphorylation by SRC and PTPN6. As to expression, detected in brain (at protein level). Highly expressed in olfactory bulb. Detected in brain cortex, hippocampus, brain stem, striatum, thalamus, hypothalamus and spinal cord.

The protein resides in the cell membrane. It localises to the nucleus inner membrane. It is found in the cell projection. Its subcellular location is the dendrite. The protein localises to the axon. The protein resides in the presynaptic cell membrane. It localises to the perikaryon. It is found in the postsynaptic density membrane. Its subcellular location is the early endosome membrane. The enzyme catalyses K(+)(in) = K(+)(out). With respect to regulation, channel activity is inhibited by interaction with Ca(2+)-bound calmodulin. Interaction of a single pore-forming alpha subunit with a calmodulin chain is sufficient to promote channel closure. Channel activity is not regulated by cyclic nucleotides. Channel activity is inhibited by binding intracellular phosphatidylinositol-3,5-bisphosphate and phosphatidylinositol-4,5-bisphosphate (PIP2), but is not inhibited by phosphatidylinositol 4-phosphate. Functionally, pore-forming (alpha) subunit of a voltage-gated delayed rectifier potassium channel that mediates outward-rectifying potassium currents which, on depolarization, reaches a steady-state level and do not inactivate. The activation kinetics depend on the prepulse potential and external divalent cation concentration. With negative prepulses, the current activation is delayed and slowed down several fold, whereas more positive prepulses speed up activation. The time course of activation is biphasic with a fast and a slowly activating current component. Activates at more positive membrane potentials and exhibit a steeper activation curve. Channel properties are modulated by subunit assembly. Mediates IK(NI) current in myoblasts. Involved in the regulation of cell proliferation and differentiation, in particular adipogenic and osteogenic differentiation in bone marrow-derived mesenchymal stem cells (MSCs). This is Voltage-gated delayed rectifier potassium channel KCNH1 from Mus musculus (Mouse).